A 510-amino-acid chain; its full sequence is NAD(P)H-quinone oxidoreductase subunit 2 A, chloroplastic (510 aa).

13 helical membrane-spanning segments follow: residues 24-44, 57-77, 99-119, 124-144, 149-169, 183-203, 227-247, 295-315, 323-343, 354-374, 395-415, 418-438, and 484-504; these read LLLF…GLIL, IPWL…ALLF, IFQF…VEYI, MAIT…MFLC, LITI…LSGY, YLLM…WLYG, PGIS…LSPA, WHLL…LIAI, MLAY…IVGD, YMLF…SFGL, ALSL…AGFF, LHLF…IGLL, and MIVC…IIAI.

The protein belongs to the complex I subunit 2 family. NDH is composed of at least 16 different subunits, 5 of which are encoded in the nucleus.

It localises to the plastid. The protein localises to the chloroplast thylakoid membrane. The enzyme catalyses a plastoquinone + NADH + (n+1) H(+)(in) = a plastoquinol + NAD(+) + n H(+)(out). It carries out the reaction a plastoquinone + NADPH + (n+1) H(+)(in) = a plastoquinol + NADP(+) + n H(+)(out). Functionally, NDH shuttles electrons from NAD(P)H:plastoquinone, via FMN and iron-sulfur (Fe-S) centers, to quinones in the photosynthetic chain and possibly in a chloroplast respiratory chain. The immediate electron acceptor for the enzyme in this species is believed to be plastoquinone. Couples the redox reaction to proton translocation, and thus conserves the redox energy in a proton gradient. The chain is NAD(P)H-quinone oxidoreductase subunit 2 A, chloroplastic from Carica papaya (Papaya).